The chain runs to 222 residues: uncharacterized protein (222 aa).

The stretch at 43-73 (SQNEEFEYEMERMLSILNEQTMDLTQLQSRI) forms a coiled coil.

This is an uncharacterized protein from Rickettsia conorii (strain ATCC VR-613 / Malish 7).